Reading from the N-terminus, the 258-residue chain is MSTLLSKTRRLNKILQKSGTEAIAFGDICQLLSDVMSCNVYLVGRKGRILGYSFSEKFECDIMKEKVVVDRKFPEDYNNKLINIQDTIANIPNKGICVFEGVGECLISKKISTIVPIVGNGDRLGTLLLARFGEEFNDDDLVLAEYSATIVGMELLRARQGEIEEEARKKAVVQLAIGTLSYSELEAVEHIFSELNGDEGLLVASKIADKVGITRSVIVNALRKFESAGVIESRSLGMKGTHIKILNEKLMDELKKIK.

Residues 1-156 form a GAF domain region; sequence MSTLLSKTRR…SATIVGMELL (156 aa). The H-T-H motif DNA-binding region spans 204–223; it reads ASKIADKVGITRSVIVNALR.

It belongs to the CodY family.

The protein resides in the cytoplasm. Its function is as follows. DNA-binding global transcriptional regulator which is involved in the adaptive response to starvation and acts by directly or indirectly controlling the expression of numerous genes in response to nutrient availability. During rapid exponential growth, CodY is highly active and represses genes whose products allow adaptation to nutrient depletion. The polypeptide is Global transcriptional regulator CodY (Clostridium perfringens (strain SM101 / Type A)).